Reading from the N-terminus, the 933-residue chain is Thyroid peroxidase (933 aa).

Positions 1–18 are cleaved as a signal peptide; that stretch reads MRALAVLSVTLVMACTEA. The Extracellular segment spans residues 19-846; it reads FFPFISRGKE…TCVDSGRLPR (828 aa). N-linked (GlcNAc...) asparagine glycosylation is present at asparagine 129. The cysteines at positions 142 and 158 are disulfide-linked. Aspartate 238 contributes to the heme b binding site. The Proton acceptor role is filled by histidine 239. Aspartate 240 is a Ca(2+) binding site. Cystine bridges form between cysteine 259–cysteine 269 and cysteine 263–cysteine 286. Asparagine 307 is a glycosylation site (N-linked (GlcNAc...) asparagine). Residues threonine 321, phenylalanine 323, aspartate 325, and serine 327 each coordinate Ca(2+). Asparagine 342 is a glycosylation site (N-linked (GlcNAc...) asparagine). Positions 399 and 494 each coordinate heme b. Residue asparagine 569 is glycosylated (N-linked (GlcNAc...) asparagine). Intrachain disulfides connect cysteine 598–cysteine 655 and cysteine 696–cysteine 721. Residues 740–795 enclose the Sushi domain; that stretch reads DKCGFPESVENGDFVHCEESGRRVLVYSCRHGYELQGREQLTCTQEGWDFQPPLCK. Residues 796–839 form the EGF-like; calcium-binding domain; it reads DVNECADGAHPPCHASARCRNTKGGFQCLCADPYELGDDGRTCV. 3 disulfide bridges follow: cysteine 800–cysteine 814, cysteine 808–cysteine 823, and cysteine 825–cysteine 838. The chain crosses the membrane as a helical span at residues 847–871; sequence VTWISMSLAALLIGGFAGLTSTVIC. At 872–933 the chain is on the cytoplasmic side; that stretch reads RWTRTGTKST…RDTHRLPRAL (62 aa). Residues 881-933 form a disordered region; that stretch reads TLPISETGGGTPELRCGKHQAVGTSPQRAAAQDSEQESAGMEGRDTHRLPRAL. The segment covering 922–933 has biased composition (basic and acidic residues); that stretch reads EGRDTHRLPRAL.

Belongs to the peroxidase family. XPO subfamily. In terms of assembly, interacts with DUOX1, DUOX2 and CYBA. It depends on Ca(2+) as a cofactor. The cofactor is heme b. In terms of processing, glycosylated. Post-translationally, heme is covalently bound through a H(2)O(2)-dependent autocatalytic process. Heme insertion is important for the delivery of protein at the cell surface. Cleaved in its N-terminal part.

Its subcellular location is the membrane. The protein localises to the cell surface. The catalysed reaction is 2 iodide + H2O2 + 2 H(+) = diiodine + 2 H2O. The enzyme catalyses [thyroglobulin]-L-tyrosine + iodide + H2O2 + H(+) = [thyroglobulin]-3-iodo-L-tyrosine + 2 H2O. It carries out the reaction [thyroglobulin]-3-iodo-L-tyrosine + iodide + H2O2 + H(+) = [thyroglobulin]-3,5-diiodo-L-tyrosine + 2 H2O. It catalyses the reaction 2 [thyroglobulin]-3,5-diiodo-L-tyrosine + H2O2 = [thyroglobulin]-L-thyroxine + [thyroglobulin]-dehydroalanine + 2 H2O. The catalysed reaction is [thyroglobulin]-3-iodo-L-tyrosine + [thyroglobulin]-3,5-diiodo-L-tyrosine + H2O2 = [thyroglobulin]-3,3',5-triiodo-L-thyronine + [thyroglobulin]-dehydroalanine + 2 H2O. It functions in the pathway hormone biosynthesis; thyroid hormone biosynthesis. Iodination and coupling of the hormonogenic tyrosines in thyroglobulin to yield the thyroid hormones T(3) and T(4). This is Thyroid peroxidase from Homo sapiens (Human).